The chain runs to 363 residues: Histidinol-phosphate aminotransferase (363 aa).

Lysine 215 carries the post-translational modification N6-(pyridoxal phosphate)lysine.

The protein belongs to the class-II pyridoxal-phosphate-dependent aminotransferase family. Histidinol-phosphate aminotransferase subfamily. As to quaternary structure, homodimer. The cofactor is pyridoxal 5'-phosphate.

The enzyme catalyses L-histidinol phosphate + 2-oxoglutarate = 3-(imidazol-4-yl)-2-oxopropyl phosphate + L-glutamate. The protein operates within amino-acid biosynthesis; L-histidine biosynthesis; L-histidine from 5-phospho-alpha-D-ribose 1-diphosphate: step 7/9. This Buchnera aphidicola subsp. Diuraphis noxia protein is Histidinol-phosphate aminotransferase.